A 258-amino-acid polypeptide reads, in one-letter code: Trifolitoxin-processing protein TfxF (258 aa).

The actions of the proteins TfxB, TfxD and TfxF are implicated in the processing of the inactive trifolitoxin (TfxA) precursor into the active peptide. The sequence is that of Trifolitoxin-processing protein TfxF (tfxF) from Rhizobium leguminosarum bv. trifolii.